The following is a 78-amino-acid chain: Beta-defensin 105A (78 aa).

Residues 1-27 form the signal peptide; it reads MALIRKTFYFLFAVFFILVQLPSGCQA. Cystine bridges form between Cys-43/Cys-74, Cys-53/Cys-67, and Cys-57/Cys-73.

It belongs to the beta-defensin family.

It is found in the secreted. Its function is as follows. Has antimicrobial activity. This chain is Beta-defensin 105A (DEFB105A), found in Gorilla gorilla gorilla (Western lowland gorilla).